The sequence spans 327 residues: GMP reductase (327 aa).

Cys175 (thioimidate intermediate) is an active-site residue. Position 204-227 (204-227 (IIADGGIRTHGDIAKSIRFGASMV)) interacts with NADP(+).

Belongs to the IMPDH/GMPR family. GuaC type 2 subfamily.

The enzyme catalyses IMP + NH4(+) + NADP(+) = GMP + NADPH + 2 H(+). Its function is as follows. Catalyzes the irreversible NADPH-dependent deamination of GMP to IMP. It functions in the conversion of nucleobase, nucleoside and nucleotide derivatives of G to A nucleotides, and in maintaining the intracellular balance of A and G nucleotides. This chain is GMP reductase, found in Oceanobacillus iheyensis (strain DSM 14371 / CIP 107618 / JCM 11309 / KCTC 3954 / HTE831).